We begin with the raw amino-acid sequence, 625 residues long: DNA-directed RNA polymerase subunit gamma (625 aa).

Residues Cys71, Cys73, Cys86, and Cys89 each contribute to the Zn(2+) site. Mg(2+) is bound by residues Asp467, Asp469, and Asp471.

Belongs to the RNA polymerase beta' chain family. RpoC1 subfamily. As to quaternary structure, in cyanobacteria the RNAP catalytic core is composed of 2 alpha, 1 beta, 1 beta', 1 gamma and 1 omega subunit. When a sigma factor is associated with the core the holoenzyme is formed, which can initiate transcription. Mg(2+) serves as cofactor. Requires Zn(2+) as cofactor.

It carries out the reaction RNA(n) + a ribonucleoside 5'-triphosphate = RNA(n+1) + diphosphate. Functionally, DNA-dependent RNA polymerase catalyzes the transcription of DNA into RNA using the four ribonucleoside triphosphates as substrates. The protein is DNA-directed RNA polymerase subunit gamma of Trichormus variabilis (strain ATCC 29413 / PCC 7937) (Anabaena variabilis).